We begin with the raw amino-acid sequence, 328 residues long: 3-dehydroquinate synthase (328 aa).

This sequence belongs to the archaeal-type DHQ synthase family.

It carries out the reaction 2-amino-2,3,7-trideoxy-D-lyxo-hept-6-ulosonate + NAD(+) + H2O = 3-dehydroquinate + NH4(+) + NADH + H(+). In terms of biological role, catalyzes the oxidative deamination and cyclization of 2-amino-3,7-dideoxy-D-threo-hept-6-ulosonic acid (ADH) to yield 3-dehydroquinate (DHQ), which is fed into the canonical shikimic pathway of aromatic amino acid biosynthesis. The chain is 3-dehydroquinate synthase from Methanosphaerula palustris (strain ATCC BAA-1556 / DSM 19958 / E1-9c).